Consider the following 154-residue polypeptide: uncharacterized protein (154 aa).

The next 4 membrane-spanning stretches (helical) occupy residues Asp-15–Thr-37, Phe-58–Gly-80, Leu-95–Thr-116, and Leu-123–His-145.

The protein resides in the cell membrane. This is an uncharacterized protein from Archaeoglobus fulgidus (strain ATCC 49558 / DSM 4304 / JCM 9628 / NBRC 100126 / VC-16).